Reading from the N-terminus, the 56-residue chain is Large ribosomal subunit protein bL33 (56 aa).

Belongs to the bacterial ribosomal protein bL33 family.

In Histophilus somni (strain 129Pt) (Haemophilus somnus), this protein is Large ribosomal subunit protein bL33.